The following is a 79-amino-acid chain: Conotoxin ArMSGL-0123 (79 aa).

The first 20 residues, 1 to 20, serve as a signal peptide directing secretion; it reads MSRLGIMVLTLLLLVFIVTS. Residues 21–44 constitute a propeptide that is removed on maturation; the sequence is HQDAGEKQATKRAAVNFRWRRSFT. 3 disulfide bridges follow: C52-C64, C56-C73, and C63-C77. L78 carries the post-translational modification Leucine amide.

Belongs to the conotoxin O3 superfamily. As to expression, expressed by the venom duct.

It localises to the secreted. The polypeptide is Conotoxin ArMSGL-0123 (Conus arenatus (Sand-dusted cone)).